Here is a 435-residue protein sequence, read N- to C-terminus: UDP-N-acetylmuramate--L-alanine ligase (435 aa).

G108 to S114 serves as a coordination point for ATP.

It belongs to the MurCDEF family.

The protein localises to the cytoplasm. The enzyme catalyses UDP-N-acetyl-alpha-D-muramate + L-alanine + ATP = UDP-N-acetyl-alpha-D-muramoyl-L-alanine + ADP + phosphate + H(+). It participates in cell wall biogenesis; peptidoglycan biosynthesis. Functionally, cell wall formation. In Exiguobacterium sp. (strain ATCC BAA-1283 / AT1b), this protein is UDP-N-acetylmuramate--L-alanine ligase.